The primary structure comprises 307 residues: Agmatinase (307 aa).

Histidine 128, aspartate 151, histidine 153, aspartate 155, aspartate 232, and aspartate 234 together coordinate Mn(2+).

The protein belongs to the arginase family. Agmatinase subfamily. Mn(2+) is required as a cofactor.

The enzyme catalyses agmatine + H2O = urea + putrescine. It functions in the pathway amine and polyamine biosynthesis; putrescine biosynthesis via agmatine pathway; putrescine from agmatine: step 1/1. In terms of biological role, catalyzes the formation of putrescine from agmatine. The protein is Agmatinase of Neisseria meningitidis serogroup C (strain 053442).